Consider the following 1322-residue polypeptide: MSPSKYLLTPPEELHPLTDSNPQIYPDFDPWIHTKEEDKILKEFVAKGYYTASRVNFETISARSALQGSLPKVSSLLGDELSKIIEIREQEINRISTLDIEDSTRFTKWSGQDFHLPNRVTLTDQKRNLWLQELSSSNTSLRKLTKSVPHGFRKRHILEQCYTQFVPIYRVIWLIKSCYAIEWKGMISKAKGETTHEELLSTLYKDWTDNMVLILEKLVFEVSKYYNDPGQLKYWKLRIAHYLKILGNCYEMELLNRSTLHQWLVDFLSKIESFEFYPMTLHILSIFWSGILGTTEEDTEIESSFLIIKLSEILLRKYHIISESKCMINDSKYIINDVQRNSKLKESVLLRLRQFISHIFHTQSLEAFIMPKQNWNIYKNYLYQILLQNVSDEETPKLKKKLKLISYRNESLRLGSLDVEPSRETSPFSTELTLDNVFSGNILNLKNVSPELLGVLDSGLSGSEWSLFIDQKITKMEQVIEIILWAINPSRKHRYDSCHLVAKILVLKINSQESFQEYSIEDVIWSLIFHFSKLSKLELQKIVWLPKLHQLLNVFIGYGIIKVPTYIRRLISSGVLYLPESENKNFHCKLLINLKISPIMKSQYNMVLKNVMEYAPHFYEKYNFDKLVSIFESLKPKLLSGDFERLEEYPGSIRIMCSEWYLSQICFNQGELQKVNNHKIIKTFQLFCINLGELHHFFGWAEYIVYHQLIDDLENLEVFTDILLYLDKAFLLLINDHILFMKTLLHSYMRDLRIKDKAAFELINFKSFWKFFVKNCANMIEMDSSLQNQIAEVFELERHRKDHFTKMPNETVSLYLEITGNKNTKFEEQNFPSVIQQNIKKVLHNPEDESNCRKLLLLCKASHASEYNKFLSIFVKRGDFTVHELLKLISLKLLSFEVIQKTSHFDLLCELVSQVSFNYGLNFENEKNAFVKRNFKQITLQLFSRPTFRDTLVRMLVEYGPNSNLSEKSAQVVSHILREEKNMSIIRDMLIYGMNIENEAIDNTIDLYRYLNFTNTWLFQILTEFNVKNSNAEDLSDFFSSIVGAIGYNSLLPKIFSNISDKKQVSTLLTVIERQFLARVLETEKSALVFLHIMMDTEIVLSRHLVNMSSLGMDSEVLELFKNTIATFAKMPNDTLKKYDENLNELLKIVIIHEKFILRHCFESIELRDHYMVDNFYTLFHNTGKDLKLKLLLYDLLTSLKSYILNETKDQALHSIKMPSVLNQLPKFAISSFLDSEGTEDEFLDKDEPSLIRLGICDKQAKTNSALKYFVFNKKSSQFDCIFKIEPFQYLVNYQEPLEGELNNTSLSLGLFDARLEKTNPS.

The interval 1 to 21 (MSPSKYLLTPPEELHPLTDSN) is disordered.

This sequence belongs to the Mediator complex subunit 12 family. Component of the SRB8-11 complex, which itself associates with the Mediator complex.

It is found in the nucleus. Its function is as follows. Component of the SRB8-11 complex. The SRB8-11 complex is a regulatory module of the Mediator complex which is itself involved in regulation of basal and activated RNA polymerase II-dependent transcription. The SRB8-11 complex may be involved in the transcriptional repression of a subset of genes regulated by Mediator. It may inhibit the association of the Mediator complex with RNA polymerase II to form the holoenzyme complex. This is Mediator of RNA polymerase II transcription subunit 12 (SRB8) from Kluyveromyces lactis (strain ATCC 8585 / CBS 2359 / DSM 70799 / NBRC 1267 / NRRL Y-1140 / WM37) (Yeast).